A 156-amino-acid polypeptide reads, in one-letter code: MNLNATLFAQMVVFLVLAWFTMKFVWPPLINALDERSKKIADGLAAAEKGKAELDAAHKRVDQELAQARNDGQQRIADAEKRAQAVAEEIKANAQAEAARIVAQAKAEAEQQIVKAREALRGEVAALAVKGAEQILKREVDQTAHAQLLNQLKAEL.

Residues 7-29 (LFAQMVVFLVLAWFTMKFVWPPL) form a helical membrane-spanning segment.

The protein belongs to the ATPase B chain family. In terms of assembly, F-type ATPases have 2 components, F(1) - the catalytic core - and F(0) - the membrane proton channel. F(1) has five subunits: alpha(3), beta(3), gamma(1), delta(1), epsilon(1). F(0) has three main subunits: a(1), b(2) and c(10-14). The alpha and beta chains form an alternating ring which encloses part of the gamma chain. F(1) is attached to F(0) by a central stalk formed by the gamma and epsilon chains, while a peripheral stalk is formed by the delta and b chains.

Its subcellular location is the cell inner membrane. F(1)F(0) ATP synthase produces ATP from ADP in the presence of a proton or sodium gradient. F-type ATPases consist of two structural domains, F(1) containing the extramembraneous catalytic core and F(0) containing the membrane proton channel, linked together by a central stalk and a peripheral stalk. During catalysis, ATP synthesis in the catalytic domain of F(1) is coupled via a rotary mechanism of the central stalk subunits to proton translocation. Functionally, component of the F(0) channel, it forms part of the peripheral stalk, linking F(1) to F(0). The chain is ATP synthase subunit b from Burkholderia cenocepacia (strain ATCC BAA-245 / DSM 16553 / LMG 16656 / NCTC 13227 / J2315 / CF5610) (Burkholderia cepacia (strain J2315)).